The sequence spans 366 residues: Phospho-N-acetylmuramoyl-pentapeptide-transferase (366 aa).

Helical transmembrane passes span 27–47 (AALFTSALIVFLFGPTIINSL), 71–91 (TPTMGGLMILAGIVGASLLWA), 93–113 (LSNVYVVATLLVTLGFGAIGF), 134–154 (LGIEFVIAGIAVYFMMRTALA), 174–194 (FLINLGIMFVVFGGFVIVGAG), 205–225 (GLAIVPVMIAAASFGVIAYLA), 245–265 (LAVVLGAVIGAGLGFLWFNAP), 268–288 (AIFMGDTGSLALGGTIGTVAV), 294–314 (IVMAIIGGLFVMETLSVIIQV), and 343–363 (QVVIRFWIIAVGLALLGLSTL).

Belongs to the glycosyltransferase 4 family. MraY subfamily. It depends on Mg(2+) as a cofactor.

Its subcellular location is the cell inner membrane. It catalyses the reaction UDP-N-acetyl-alpha-D-muramoyl-L-alanyl-gamma-D-glutamyl-meso-2,6-diaminopimeloyl-D-alanyl-D-alanine + di-trans,octa-cis-undecaprenyl phosphate = di-trans,octa-cis-undecaprenyl diphospho-N-acetyl-alpha-D-muramoyl-L-alanyl-D-glutamyl-meso-2,6-diaminopimeloyl-D-alanyl-D-alanine + UMP. It functions in the pathway cell wall biogenesis; peptidoglycan biosynthesis. In terms of biological role, catalyzes the initial step of the lipid cycle reactions in the biosynthesis of the cell wall peptidoglycan: transfers peptidoglycan precursor phospho-MurNAc-pentapeptide from UDP-MurNAc-pentapeptide onto the lipid carrier undecaprenyl phosphate, yielding undecaprenyl-pyrophosphoryl-MurNAc-pentapeptide, known as lipid I. The sequence is that of Phospho-N-acetylmuramoyl-pentapeptide-transferase from Rhizobium etli (strain ATCC 51251 / DSM 11541 / JCM 21823 / NBRC 15573 / CFN 42).